The following is an 83-amino-acid chain: Putative snRNP Sm-like protein (83 aa).

The region spanning 9-81 (KPMDVLKNAL…VIFVSPSKGD (73 aa)) is the Sm domain.

It belongs to the snRNP Sm proteins family.

This is Putative snRNP Sm-like protein from Thermoplasma volcanium (strain ATCC 51530 / DSM 4299 / JCM 9571 / NBRC 15438 / GSS1).